A 242-amino-acid chain; its full sequence is MGKRLISQRRGRGSSVYTCPSHKRRGEAKYRRFDELEKKGKVLGKIVDILHDPGRSAPVAKVEYETGEEGLLVVPEGVKVGDIIECGVSAEIKPGNILPLGAIPEGIPVFNIETVPGDGGKLVRAGGCYAHILTHDGERTYVKLPSGHIKALHSMCRATIGVVAGGGRKEKPFVKAGKKYHAMKAKAVKWPRVRGVAMNAVDHPFGGGRHQHTGKPTTVSRKKVPPGRKVGHISARRTGVRK.

Positions 201 to 242 are disordered; sequence VDHPFGGGRHQHTGKPTTVSRKKVPPGRKVGHISARRTGVRK. Positions 220 to 242 are enriched in basic residues; that stretch reads SRKKVPPGRKVGHISARRTGVRK.

This sequence belongs to the universal ribosomal protein uL2 family. As to quaternary structure, part of the 50S ribosomal subunit. Forms a bridge to the 30S subunit in the 70S ribosome.

In terms of biological role, one of the primary rRNA binding proteins. Required for association of the 30S and 50S subunits to form the 70S ribosome, for tRNA binding and peptide bond formation. It has been suggested to have peptidyltransferase activity; this is somewhat controversial. Makes several contacts with the 16S rRNA in the 70S ribosome. This is Large ribosomal subunit protein uL2 from Methanocaldococcus jannaschii (strain ATCC 43067 / DSM 2661 / JAL-1 / JCM 10045 / NBRC 100440) (Methanococcus jannaschii).